The sequence spans 463 residues: Glutamate--tRNA ligase 2 (463 aa).

The 'HIGH' region signature appears at 10 to 20; sequence PSPTGFLHIGS. Residues 239–243 carry the 'KMSKS' region motif; sequence KLSKR. Lysine 242 contacts ATP.

This sequence belongs to the class-I aminoacyl-tRNA synthetase family. Glutamate--tRNA ligase type 1 subfamily. As to quaternary structure, monomer.

It is found in the cytoplasm. It catalyses the reaction tRNA(Glu) + L-glutamate + ATP = L-glutamyl-tRNA(Glu) + AMP + diphosphate. Its function is as follows. Catalyzes the attachment of glutamate to tRNA(Glu) in a two-step reaction: glutamate is first activated by ATP to form Glu-AMP and then transferred to the acceptor end of tRNA(Glu). The polypeptide is Glutamate--tRNA ligase 2 (Rickettsia akari (strain Hartford)).